Reading from the N-terminus, the 1077-residue chain is Teashirt homolog 1 (1077 aa).

3 disordered regions span residues 1 to 109, 139 to 195, and 269 to 298; these read MPRR…VSYP, SGST…SSSS, and GHYR…MEME. The span at 26 to 36 shows a compositional bias: acidic residues; it reads IDEEHVEDDGL. Composition is skewed to polar residues over residues 57 to 71 and 139 to 152; these read QSYQ…TNQD and SGST…SQKE. A compositionally biased stretch (low complexity) spans 164 to 195; the sequence is PVSTTGPTTSTPSTSCSSSTSHSSTTSTSSSS. 2 consecutive C2H2-type zinc fingers follow at residues 246-270 and 307-331; these read FRCK…ETGH and LKCM…KTKH. Residues 269 to 284 are compositionally biased toward basic and acidic residues; sequence GHYRDDNRDKDSEKTK. Residues 416–440 form a C2H2-type 3; atypical zinc finger; it reads LKCMECGSSHDTLQQLTAHMMVTGH. 2 disordered regions span residues 467-549 and 647-720; these read SIPL…KGGL and TGKV…EPLK. Composition is skewed to basic and acidic residues over residues 496 to 528, 647 to 665, and 675 to 708; these read SEEK…EKFE, TGKV…EKSS, and KENK…EGPL. Ser765 carries the post-translational modification Phosphoserine. The disordered stretch occupies residues 848–873; the sequence is TGRLTPKSSTPSTVSEKSDADGSSFE. Over residues 853–862 the composition is skewed to polar residues; it reads PKSSTPSTVS. The homeobox; atypical DNA-binding region spans 885 to 955; that stretch reads RKGRQSNWNP…NVKYQLRRTG (71 aa). 2 consecutive C2H2-type zinc fingers follow at residues 970–992 and 1037–1060; these read FFCN…LETH and FQCK…SKTH.

This sequence belongs to the teashirt C2H2-type zinc-finger protein family. As to quaternary structure, interacts (via homeobox domain) with APBB1 (via PID domain 1). As to expression, expressed in brain; strongly reduced in post-mortem elderly subjects with Alzheimer disease.

It localises to the nucleus. Probable transcriptional regulator involved in developmental processes. May act as a transcriptional repressor (Potential). This chain is Teashirt homolog 1 (TSHZ1), found in Homo sapiens (Human).